The following is a 113-amino-acid chain: Iron-sulfur cluster insertion protein ErpA (113 aa).

3 residues coordinate iron-sulfur cluster: Cys-41, Cys-105, and Cys-107.

Belongs to the HesB/IscA family. Homodimer. Iron-sulfur cluster serves as cofactor.

Its function is as follows. Required for insertion of 4Fe-4S clusters for at least IspG. The sequence is that of Iron-sulfur cluster insertion protein ErpA from Vibrio parahaemolyticus serotype O3:K6 (strain RIMD 2210633).